Reading from the N-terminus, the 162-residue chain is Phosphopantetheine adenylyltransferase (162 aa).

T9 serves as a coordination point for substrate. ATP contacts are provided by residues T9 to F10 and H17. Residues K41, L77, and R91 each contribute to the substrate site. ATP contacts are provided by residues G92 to R94, E102, and R127 to K133.

The protein belongs to the bacterial CoaD family. As to quaternary structure, homohexamer. It depends on Mg(2+) as a cofactor.

Its subcellular location is the cytoplasm. It catalyses the reaction (R)-4'-phosphopantetheine + ATP + H(+) = 3'-dephospho-CoA + diphosphate. It functions in the pathway cofactor biosynthesis; coenzyme A biosynthesis; CoA from (R)-pantothenate: step 4/5. Functionally, reversibly transfers an adenylyl group from ATP to 4'-phosphopantetheine, yielding dephospho-CoA (dPCoA) and pyrophosphate. The polypeptide is Phosphopantetheine adenylyltransferase (Cereibacter sphaeroides (strain ATCC 17025 / ATH 2.4.3) (Rhodobacter sphaeroides)).